The primary structure comprises 120 residues: Fluoride-specific ion channel FluC (120 aa).

The next 3 membrane-spanning stretches (helical) occupy residues 30–50 (FGTL…YGLL), 66–86 (VGFL…LLLL), and 96–116 (LNII…LQLV). Na(+) contacts are provided by glycine 70 and threonine 73.

The protein belongs to the fluoride channel Fluc/FEX (TC 1.A.43) family.

The protein resides in the cell inner membrane. The catalysed reaction is fluoride(in) = fluoride(out). Its activity is regulated as follows. Na(+) is not transported, but it plays an essential structural role and its presence is essential for fluoride channel function. Fluoride-specific ion channel. Important for reducing fluoride concentration in the cell, thus reducing its toxicity. This chain is Fluoride-specific ion channel FluC, found in Pseudoalteromonas translucida (strain TAC 125).